The primary structure comprises 1293 residues: Galactose/N-acetyl-D-galactosamine lectin heavy subunit 1 (1293 aa).

The signal sequence occupies residues 1-15 (MKLLLLNILLLCCLA). Topologically, residues 16-1234 (DKLNEFSADI…NNVGAIAAAT (1219 aa)) are extracellular. 16 N-linked (GlcNAc...) asparagine glycosylation sites follow: Asn-95, Asn-198, Asn-234, Asn-261, Asn-337, Asn-377, Asn-390, Asn-468, Asn-487, Asn-643, Asn-659, Asn-890, Asn-992, Asn-1138, Asn-1204, and Asn-1214. A helical membrane pass occupies residues 1235-1255 (TVAVVVVAVVVALIVVSIGLF). Over 1256-1293 (KTYQLVSSAMKNAITITNENAEYVGADNEATNAATFNG) the chain is Cytoplasmic.

As to quaternary structure, heterodimer composed of a 170 kDa heavy subunit (hgl) and a 31/35 kDa light subunit (lgl); disulfide-linked. N-glycosylated.

It localises to the cell membrane. Its function is as follows. Lectin which binds galactose and N-acetyl-D-galactosamine of host glycoproteins and thus mediates adhesion to host cells. Mediates adherence to host colonic mucins, an essential step for pathogenic tissue invasion. The chain is Galactose/N-acetyl-D-galactosamine lectin heavy subunit 1 from Entamoeba histolytica (strain ATCC 30459 / HM-1:IMSS / ABRM).